Consider the following 28-residue polypeptide: 3-phytase B (28 aa).

Residues 1 to 28 (RDPTGCEVDQVIMVKRHGERYPSPSAGK) are disordered. Histidine 17 (nucleophile) is an active-site residue.

The protein belongs to the histidine acid phosphatase family.

The enzyme catalyses 1D-myo-inositol hexakisphosphate + H2O = 1D-myo-inositol 1,2,4,5,6-pentakisphosphate + phosphate. Functionally, catalyzes the hydrolysis of inorganic orthophosphate from phytate. The protein is 3-phytase B (phyB) of Aspergillus ficuum.